The following is a 259-amino-acid chain: DNA-directed RNA polymerase 30 kDa polypeptide (259 aa).

The TFIIS-type zinc finger occupies 155–195 (YNTPCPNCKSRNTTPMMIQTRAADEPPLVRHACRDCKQHFK). 4 residues coordinate Zn(2+): cysteine 159, cysteine 162, cysteine 187, and cysteine 190. Positions 220–259 (EILPDNNPSPPESPEPASPIDDGLIRATFDRNDEPPEDDE) are disordered. Positions 226-236 (NPSPPESPEPA) are enriched in pro residues.

It belongs to the poxviridae DNA-directed RNA polymerase 30 kDa subunit family. The DNA-dependent RNA polymerase (vRNAP) consists of eight subunits encoded by early viral genes and termed according to their apparent molecular masses Rpo147, Rpo132, Rpo35, Rpo30, Rpo22, Rpo19, Rpo18, and Rpo7. The same holoenzyme, with the addition of the transcription-specificity factor RAP94, is used for early gene expression.

It is found in the virion. It localises to the host cytoplasm. It carries out the reaction RNA(n) + a ribonucleoside 5'-triphosphate = RNA(n+1) + diphosphate. Functionally, part of the DNA-dependent RNA polymerase which catalyzes the transcription of viral DNA into RNA using the four ribonucleoside triphosphates as substrates. Responsible for the transcription of early, intermediate and late genes. DNA-dependent RNA polymerase associates with the early transcription factor (ETF), itself composed of OPG118 and OPG134, thereby allowing the early genes transcription. Late transcription, and probably also intermediate transcription, require newly synthesized RNA polymerase. This Homo sapiens (Human) protein is DNA-directed RNA polymerase 30 kDa polypeptide (OPG066).